Reading from the N-terminus, the 205-residue chain is uncharacterized protein (205 aa).

Belongs to the flavoredoxin family. FMN is required as a cofactor.

This is an uncharacterized protein from Bacillus subtilis (strain 168).